The chain runs to 338 residues: Peroxidase 15 (338 aa).

Positions 1-22 (MARIGSFLIILYLIYALTLCIC) are cleaved as a signal peptide. Cystine bridges form between C45-C125, C78-C83, C131-C332, and C210-C242. The Proton acceptor role is filled by H76. The Ca(2+) site is built by D77, V80, G82, D84, and S86. Residue P173 participates in substrate binding. N176 carries an N-linked (GlcNAc...) asparagine glycan. H203 is a binding site for heme b. T204 contacts Ca(2+). N-linked (GlcNAc...) asparagine glycosylation is found at N219 and N250. D255, S258, and D263 together coordinate Ca(2+).

It belongs to the peroxidase family. Classical plant (class III) peroxidase subfamily. It depends on heme b as a cofactor. The cofactor is Ca(2+).

Its subcellular location is the secreted. The catalysed reaction is 2 a phenolic donor + H2O2 = 2 a phenolic radical donor + 2 H2O. In terms of biological role, removal of H(2)O(2), oxidation of toxic reductants, biosynthesis and degradation of lignin, suberization, auxin catabolism, response to environmental stresses such as wounding, pathogen attack and oxidative stress. These functions might be dependent on each isozyme/isoform in each plant tissue. This chain is Peroxidase 15 (PER15), found in Arabidopsis thaliana (Mouse-ear cress).